A 371-amino-acid chain; its full sequence is MSKRDYYEVLGLSKGASKDEIKKAYRRLAKKYHPDVSKEENAIEKFKEVQEAYEVLSDDQKRAQYDQFGHAGANQGFGGFGGGGDFGGGFGFEDIFSSFFGGGGGRRRDPNAPRQGADLQYQVTLEFEEAIFGKELNVEIPVEDPCDTCKGSGAKPGTSKETCKHCSGSGQVSVEQNTPFGRIVNRQACSHCSGTGQMIKEKCTTCHGSGKVRKRKKINVKIPAGIDNGQQIRVSGKGEAGVNGGPXGDLYVVVHVRSHEFFEREGDHIICEMPLTFAQMALGAEVEVPTVHGKVKLKIPAGTQTGTEFRLKGKGAPNVRGYGQGDQYVVVRVVVPTKLTSHQKDLLREFAGQEEQDDSLFGKLKRAFKGE.

The J domain maps to 5 to 69; the sequence is DYYEVLGLSK…QKRAQYDQFG (65 aa). A CR-type zinc finger spans residues 133-215; it reads GKELNVEIPV…CHGSGKVRKR (83 aa). Cys-146, Cys-149, Cys-163, Cys-166, Cys-189, Cys-192, Cys-203, and Cys-206 together coordinate Zn(2+). CXXCXGXG motif repeat units lie at residues 146–153, 163–170, 189–196, and 203–210; these read CDTCKGSG, CKHCSGSG, CSHCSGTG, and CTTCHGSG.

It belongs to the DnaJ family. Homodimer. Zn(2+) serves as cofactor.

It is found in the cytoplasm. Participates actively in the response to hyperosmotic and heat shock by preventing the aggregation of stress-denatured proteins and by disaggregating proteins, also in an autonomous, DnaK-independent fashion. Unfolded proteins bind initially to DnaJ; upon interaction with the DnaJ-bound protein, DnaK hydrolyzes its bound ATP, resulting in the formation of a stable complex. GrpE releases ADP from DnaK; ATP binding to DnaK triggers the release of the substrate protein, thus completing the reaction cycle. Several rounds of ATP-dependent interactions between DnaJ, DnaK and GrpE are required for fully efficient folding. Also involved, together with DnaK and GrpE, in the DNA replication of plasmids through activation of initiation proteins. This chain is Chaperone protein DnaJ, found in Bacillus cereus (strain AH820).